Here is a 186-residue protein sequence, read N- to C-terminus: Secreted chorismate mutase (186 aa).

The N-terminal stretch at 1-30 is a signal peptide; sequence MQPTHTLTRLTVIGKLIIASSFFLSLAVQA. The Chorismate mutase domain maps to 31–107; sequence QQCGQTAPLI…AAKAIQYRYR (77 aa). Cys33 and Cys148 form a disulfide bridge. Substrate contacts are provided by residues Arg43, Lys54, Asp63, 99 to 103, and Arg127; that span reads AKAIQ.

As to quaternary structure, homodimer.

The protein resides in the periplasm. It catalyses the reaction chorismate = prephenate. Its pathway is metabolic intermediate biosynthesis; prephenate biosynthesis; prephenate from chorismate: step 1/1. Its function is as follows. Catalyzes the Claisen rearrangement of chorismate to prephenate. May play some role in the pathogenicity. In Yersinia pestis, this protein is Secreted chorismate mutase (pheA2).